We begin with the raw amino-acid sequence, 307 residues long: Ornithine carbamoyltransferase (307 aa).

Carbamoyl phosphate contacts are provided by residues 56–59, Q83, R107, and 134–137; these read STRT and HPCQ. Residues N165, D223, and 227–228 contribute to the L-ornithine site; that span reads SM. Residues 263-264 and R291 each bind carbamoyl phosphate; that span reads CL.

Belongs to the aspartate/ornithine carbamoyltransferase superfamily. OTCase family.

It is found in the cytoplasm. It carries out the reaction carbamoyl phosphate + L-ornithine = L-citrulline + phosphate + H(+). It functions in the pathway amino-acid biosynthesis; L-arginine biosynthesis; L-arginine from L-ornithine and carbamoyl phosphate: step 1/3. Its function is as follows. Reversibly catalyzes the transfer of the carbamoyl group from carbamoyl phosphate (CP) to the N(epsilon) atom of ornithine (ORN) to produce L-citrulline. The sequence is that of Ornithine carbamoyltransferase from Cupriavidus metallidurans (strain ATCC 43123 / DSM 2839 / NBRC 102507 / CH34) (Ralstonia metallidurans).